Reading from the N-terminus, the 62-residue chain is MGKGTPSMGKHGRSKTHIRCRRCGRHAFNVAKGYCAACGFGRSKRIRRYSWQNKKVNRIRIR.

4 residues coordinate Zn(2+): Cys-20, Cys-23, Cys-35, and Cys-38. The C4-type zinc finger occupies 20 to 38 (CRRCGRHAFNVAKGYCAAC).

Belongs to the eukaryotic ribosomal protein eL37 family. Zn(2+) is required as a cofactor.

Functionally, binds to the 23S rRNA. In Staphylothermus marinus (strain ATCC 43588 / DSM 3639 / JCM 9404 / F1), this protein is Large ribosomal subunit protein eL37.